We begin with the raw amino-acid sequence, 102 residues long: Large ribosomal subunit protein bL21 (102 aa).

This sequence belongs to the bacterial ribosomal protein bL21 family. In terms of assembly, part of the 50S ribosomal subunit. Contacts protein L20.

This protein binds to 23S rRNA in the presence of protein L20. The sequence is that of Large ribosomal subunit protein bL21 from Ligilactobacillus salivarius (strain UCC118) (Lactobacillus salivarius).